Here is a 663-residue protein sequence, read N- to C-terminus: DNA topoisomerase 4 subunit B (663 aa).

ATP is bound by residues Y7, N47, D74, 114–120 (GLHGVGA), and K341. A disordered region spans residues 386–418 (REAARKAREDARSGKKNKRKDTLLSGKLTPAQS). Residues 387 to 398 (EAARKAREDARS) are compositionally biased toward basic and acidic residues. The 115-residue stretch at 424-538 (NELYLVEGDS…AGRVFIALPP (115 aa)) folds into the Toprim domain. Mg(2+) is bound by residues E430, D503, and D505.

The protein belongs to the type II topoisomerase family. ParE type 2 subfamily. As to quaternary structure, heterotetramer composed of ParC and ParE. Requires Mg(2+) as cofactor. Mn(2+) is required as a cofactor. Ca(2+) serves as cofactor.

It carries out the reaction ATP-dependent breakage, passage and rejoining of double-stranded DNA.. In terms of biological role, topoisomerase IV is essential for chromosome segregation. It relaxes supercoiled DNA. Performs the decatenation events required during the replication of a circular DNA molecule. This Staphylococcus aureus (strain MRSA252) protein is DNA topoisomerase 4 subunit B.